A 142-amino-acid chain; its full sequence is Hemoglobin subunit alpha (142 aa).

The Globin domain maps to 2-142 (VLSATDKSNV…VSTVLTSKYR (141 aa)). At serine 4 the chain carries Phosphoserine. Lysine 8 and lysine 12 each carry N6-succinyllysine. At lysine 17 the chain carries N6-acetyllysine; alternate. Lysine 17 is subject to N6-succinyllysine; alternate. The residue at position 25 (tyrosine 25) is a Phosphotyrosine. At serine 36 the chain carries Phosphoserine. Lysine 41 is subject to N6-succinyllysine. Phosphoserine is present on serine 50. Histidine 59 contacts O2. Heme b is bound at residue histidine 88. Serine 103 bears the Phosphoserine mark. Threonine 109 bears the Phosphothreonine mark. Phosphoserine is present on serine 125. Phosphothreonine occurs at positions 135 and 138. At serine 139 the chain carries Phosphoserine.

It belongs to the globin family. As to quaternary structure, heterotetramer of two alpha chains and two beta chains. As to expression, red blood cells.

Involved in oxygen transport from the lung to the various peripheral tissues. Functionally, hemopressin acts as an antagonist peptide of the cannabinoid receptor CNR1. Hemopressin-binding efficiently blocks cannabinoid receptor CNR1 and subsequent signaling. This is Hemoglobin subunit alpha (HBA) from Alces alces alces (European moose).